Reading from the N-terminus, the 251-residue chain is Transcriptional cofactor Bfc (251 aa).

Interacts with srp (via GATA-type Zn-finger domain); this interaction enhances srp binding to the promoter of crq/croquemort.

The protein resides in the nucleus. Transcriptional cofactor involved in efferocytosis. Together with srp mediates expression of the phagocytic receptor crq/croquemort in response to apoptotic cells, and is up-regulated by crq/croquemort in a positive feedback mechanism. Involved in macrophage engulfment and clearance of apoptotic cells during embryogenesis. The chain is Transcriptional cofactor Bfc from Drosophila melanogaster (Fruit fly).